The sequence spans 537 residues: CTP synthase (537 aa).

An amidoligase domain region spans residues 1-265; it reads MVHFIFVTGG…DNKVLKFFNI (265 aa). S13 provides a ligand contact to CTP. S13 contacts UTP. ATP is bound by residues 14-19 and D71; that span reads SLGKGL. The Mg(2+) site is built by D71 and E139. CTP is bound by residues 146-148 and K222; that span reads DIE. K222 serves as a coordination point for UTP. The 247-residue stretch at 290–536 folds into the Glutamine amidotransferase type-1 domain; that stretch reads RIAIIAKYHK…IKAAIEYNKC (247 aa). G352 is an L-glutamine binding site. Residue C379 is the Nucleophile; for glutamine hydrolysis of the active site. Residues 380-383, E403, and R464 each bind L-glutamine; that span reads FGMQ. Catalysis depends on residues H509 and E511.

The protein belongs to the CTP synthase family. As to quaternary structure, homotetramer.

It carries out the reaction UTP + L-glutamine + ATP + H2O = CTP + L-glutamate + ADP + phosphate + 2 H(+). The enzyme catalyses L-glutamine + H2O = L-glutamate + NH4(+). It catalyses the reaction UTP + NH4(+) + ATP = CTP + ADP + phosphate + 2 H(+). It functions in the pathway pyrimidine metabolism; CTP biosynthesis via de novo pathway; CTP from UDP: step 2/2. Allosterically activated by GTP, when glutamine is the substrate; GTP has no effect on the reaction when ammonia is the substrate. The allosteric effector GTP functions by stabilizing the protein conformation that binds the tetrahedral intermediate(s) formed during glutamine hydrolysis. Inhibited by the product CTP, via allosteric rather than competitive inhibition. Its function is as follows. Catalyzes the ATP-dependent amination of UTP to CTP with either L-glutamine or ammonia as the source of nitrogen. Regulates intracellular CTP levels through interactions with the four ribonucleotide triphosphates. This chain is CTP synthase, found in Rickettsia conorii (strain ATCC VR-613 / Malish 7).